The following is a 465-amino-acid chain: Methionine aminopeptidase 2-1 (465 aa).

The segment at Met1–Ala100 is disordered. The span at Arg31–Asp40 shows a compositional bias: basic and acidic residues. Basic residues predominate over residues Ser75–Ser87. His216 is a binding site for substrate. Residues Asp237, Asp248, and His317 each coordinate a divalent metal cation. His325 is a substrate binding site. A divalent metal cation contacts are provided by Glu350 and Glu446.

Belongs to the peptidase M24A family. Methionine aminopeptidase eukaryotic type 2 subfamily. Requires Co(2+) as cofactor. It depends on Zn(2+) as a cofactor. Mn(2+) serves as cofactor. The cofactor is Fe(2+).

It is found in the cytoplasm. The enzyme catalyses Release of N-terminal amino acids, preferentially methionine, from peptides and arylamides.. Cotranslationally removes the N-terminal methionine from nascent proteins. The N-terminal methionine is often cleaved when the second residue in the primary sequence is small and uncharged (Met-Ala-, Cys, Gly, Pro, Ser, Thr, or Val). The protein is Methionine aminopeptidase 2-1 of Penicillium rubens (strain ATCC 28089 / DSM 1075 / NRRL 1951 / Wisconsin 54-1255) (Penicillium chrysogenum).